Reading from the N-terminus, the 385-residue chain is Glucans biosynthesis protein C (385 aa).

10 consecutive transmembrane segments (helical) span residues 17-37, 60-80, 91-111, 137-157, 173-193, 212-232, 239-259, 274-294, 311-331, and 338-358; these read AWLM…SHTW, MQVF…RYPL, VGIP…IMLQ, ISHL…VWIF, KFSM…YAVI, FIVM…LAFI, LFTT…VAYL, TESV…FSFG, ASLF…AYIT, and WLGF…LYEI.

This sequence belongs to the acyltransferase 3 family. OpgC subfamily.

It localises to the cell membrane. It participates in glycan metabolism; osmoregulated periplasmic glucan (OPG) biosynthesis. In terms of biological role, necessary for the succinyl substitution of periplasmic glucans. Could catalyze the transfer of succinyl residues from the cytoplasmic side of the membrane to the nascent glucan backbones on the periplasmic side of the membrane. The chain is Glucans biosynthesis protein C from Escherichia coli O139:H28 (strain E24377A / ETEC).